A 454-amino-acid polypeptide reads, in one-letter code: UDP-N-acetylmuramate--L-alanine ligase (454 aa).

109 to 115 (GTHGKTT) contacts ATP.

It belongs to the MurCDEF family.

It localises to the cytoplasm. It catalyses the reaction UDP-N-acetyl-alpha-D-muramate + L-alanine + ATP = UDP-N-acetyl-alpha-D-muramoyl-L-alanine + ADP + phosphate + H(+). It participates in cell wall biogenesis; peptidoglycan biosynthesis. Cell wall formation. The polypeptide is UDP-N-acetylmuramate--L-alanine ligase (Protochlamydia amoebophila (strain UWE25)).